Consider the following 273-residue polypeptide: Dermonecrotic toxin LhSicTox-alphaIA1iv (273 aa).

The active site involves H5. Mg(2+)-binding residues include E25 and D27. The active-site Nucleophile is H41. Cystine bridges form between C45–C51 and C47–C190. D85 provides a ligand contact to Mg(2+).

This sequence belongs to the arthropod phospholipase D family. Class II subfamily. Requires Mg(2+) as cofactor. In terms of tissue distribution, expressed by the venom gland.

It is found in the secreted. It catalyses the reaction an N-(acyl)-sphingosylphosphocholine = an N-(acyl)-sphingosyl-1,3-cyclic phosphate + choline. The enzyme catalyses an N-(acyl)-sphingosylphosphoethanolamine = an N-(acyl)-sphingosyl-1,3-cyclic phosphate + ethanolamine. It carries out the reaction a 1-acyl-sn-glycero-3-phosphocholine = a 1-acyl-sn-glycero-2,3-cyclic phosphate + choline. The catalysed reaction is a 1-acyl-sn-glycero-3-phosphoethanolamine = a 1-acyl-sn-glycero-2,3-cyclic phosphate + ethanolamine. In terms of biological role, dermonecrotic toxins cleave the phosphodiester linkage between the phosphate and headgroup of certain phospholipids (sphingolipid and lysolipid substrates), forming an alcohol (often choline) and a cyclic phosphate. This toxin acts on sphingomyelin (SM). It may also act on ceramide phosphoethanolamine (CPE), lysophosphatidylcholine (LPC) and lysophosphatidylethanolamine (LPE), but not on lysophosphatidylserine (LPS), and lysophosphatidylglycerol (LPG). It acts by transphosphatidylation, releasing exclusively cyclic phosphate products as second products. Induces dermonecrosis, hemolysis, increased vascular permeability, edema, inflammatory response, and platelet aggregation. The sequence is that of Dermonecrotic toxin LhSicTox-alphaIA1iv from Loxosceles hirsuta (Recluse spider).